We begin with the raw amino-acid sequence, 410 residues long: Peptide chain release factor subunit 1 (410 aa).

This sequence belongs to the eukaryotic release factor 1 family. Heterodimer of two subunits, one of which binds GTP.

It is found in the cytoplasm. Its function is as follows. Directs the termination of nascent peptide synthesis (translation) in response to the termination codons UAA, UAG and UGA. This Picrophilus torridus (strain ATCC 700027 / DSM 9790 / JCM 10055 / NBRC 100828 / KAW 2/3) protein is Peptide chain release factor subunit 1.